Reading from the N-terminus, the 195-residue chain is Imidazoleglycerol-phosphate dehydratase (195 aa).

This sequence belongs to the imidazoleglycerol-phosphate dehydratase family.

It is found in the cytoplasm. The enzyme catalyses D-erythro-1-(imidazol-4-yl)glycerol 3-phosphate = 3-(imidazol-4-yl)-2-oxopropyl phosphate + H2O. It participates in amino-acid biosynthesis; L-histidine biosynthesis; L-histidine from 5-phospho-alpha-D-ribose 1-diphosphate: step 6/9. The polypeptide is Imidazoleglycerol-phosphate dehydratase (Thermotoga neapolitana (strain ATCC 49049 / DSM 4359 / NBRC 107923 / NS-E)).